The chain runs to 328 residues: Serine/threonine protein kinase RdoA (328 aa).

Aspartate 201 (proton acceptor) is an active-site residue. Residues asparagine 206 and aspartate 217 each coordinate Mg(2+). Aspartate 217 is a catalytic residue.

The protein belongs to the SrkA/RdoA protein kinase family. As to quaternary structure, monomer. Requires Mg(2+) as cofactor.

The protein localises to the cytoplasm. It catalyses the reaction L-seryl-[protein] + ATP = O-phospho-L-seryl-[protein] + ADP + H(+). The enzyme catalyses L-threonyl-[protein] + ATP = O-phospho-L-threonyl-[protein] + ADP + H(+). A protein kinase that (auto)phosphorylates on Ser and Thr residues, probably involved in the extracytoplasmic stress response. Probably acts to suppress the effects of stress linked to accumulation of reactive oxygen species. The sequence is that of Serine/threonine protein kinase RdoA from Salmonella typhimurium (strain LT2 / SGSC1412 / ATCC 700720).